The chain runs to 1863 residues: Breast cancer type 1 susceptibility protein homolog (1863 aa).

Met-1 carries the N-acetylmethionine modification. The RING-type zinc-finger motif lies at 24–65 (CPICLELIKEPVSTKCDHIFCKFCMLKLLNQKKGPSQCPLCK). Lys-109 participates in a covalent cross-link: Glycyl lysine isopeptide (Lys-Gly) (interchain with G-Cter in SUMO2). Ser-114 is modified (phosphoserine). Residues 230-267 (ETDVTNTEHHQPSNNDLNTTEKRATERHPEKYQGSSVS) are disordered. The span at 248 to 260 (TTEKRATERHPEK) shows a compositional bias: basic and acidic residues. Residue Lys-301 forms a Glycyl lysine isopeptide (Lys-Gly) (interchain with G-Cter in SUMO2) linkage. A disordered region spans residues 306–338 (NKSKQPGLARSQHNRWAGSKETCNDRRTPSTEK). Positions 327-338 (TCNDRRTPSTEK) are enriched in basic and acidic residues. Lys-339 is covalently cross-linked (Glycyl lysine isopeptide (Lys-Gly) (interchain with G-Cter in SUMO2)). Phosphoserine is present on residues Ser-395, Ser-398, Ser-423, and Ser-434. Glycyl lysine isopeptide (Lys-Gly) (interchain with G-Cter in SUMO2) cross-links involve residues Lys-443, Lys-459, and Lys-519. Ser-551 carries the post-translational modification Phosphoserine. Glycyl lysine isopeptide (Lys-Gly) (interchain with G-Cter in SUMO2) cross-links involve residues Lys-583 and Lys-654. The segment at 650-739 (IKKKKYNQMP…EKEEKLETVK (90 aa)) is disordered. Phosphoserine occurs at positions 694, 708, and 725. The span at 705–716 (APGSFTNCSNTS) shows a compositional bias: polar residues. Positions 727–737 (PREEKEEKLET) are enriched in basic and acidic residues. Residues Lys-734 and Lys-739 each participate in a glycyl lysine isopeptide (Lys-Gly) (interchain with G-Cter in SUMO2) cross-link. Phosphoserine is present on residues Ser-753 and Ser-840. A disordered region spans residues 896–915 (SPKVTFEREQKEQNQGKNES). Residues 900–909 (TFEREQKEQN) show a composition bias toward basic and acidic residues. Residues Lys-918 and Lys-987 each participate in a glycyl lysine isopeptide (Lys-Gly) (interchain with G-Cter in SUMO2) cross-link. Ser-988 carries the post-translational modification Phosphoserine; by CHEK2. Ser-1009 carries the phosphoserine modification. A Glycyl lysine isopeptide (Lys-Gly) (interchain with G-Cter in SUMO2) cross-link involves residue Lys-1079. Phosphoserine occurs at positions 1143, 1189, 1191, 1211, 1217, 1218, 1280, 1328, 1336, 1342, and 1387. The disordered stretch occupies residues 1181 to 1216 (VQRGELSRSPSPFTHTHLAQGYRRGAKKLESSEENL). Residues 1322–1395 (KQMRHQSESQ…SSQSDILTTQ (74 aa)) are disordered. Residues 1373–1395 (ESETSVSEDCSGLSSQSDILTTQ) show a composition bias toward polar residues. Thr-1394 is modified (phosphothreonine). The segment at 1397–1424 (RDTMQDNLIKLQQEMAELEAVLEQHGSQ) is interaction with PALB2. Phosphoserine is present on residues Ser-1423, Ser-1457, Ser-1524, and Ser-1542. Residues 1440–1505 (EDLQNPEQST…SSPSKCPSLD (66 aa)) are disordered. Polar residues predominate over residues 1444–1470 (NPEQSTSEKAVLTSQKSSEYPISQNPE). Positions 1565–1642 (ESGISLFSDD…SREKPELTAS (78 aa)) are disordered. Residues 1610–1624 (SAQSPAAAHTTNTAG) are compositionally biased toward polar residues. BRCT domains are found at residues 1642 to 1736 (STER…DFEV) and 1756 to 1855 (QDRK…TYLI).

As to quaternary structure, heterodimer with BARD1. Part of the BRCA1-associated genome surveillance complex (BASC), which contains BRCA1, MSH2, MSH6, MLH1, ATM, BLM, PMS2 and the MRE11-RAD50-NBN protein (MRN) complex. This association could be a dynamic process changing throughout the cell cycle and within subnuclear domains. Component of the BRCA1-A complex, at least composed of BRCA1, BARD1, UIMC1/RAP80, ABRAXAS1, BRCC3/BRCC36, BABAM2 and BABAM1/NBA1. Interacts (via the BRCT domains) with ABRAXAS1 (phosphorylated form); this is important for recruitment to sites of DNA damage. Can form a heterotetramer with two molecules of ABRAXAS1 (phosphorylated form). Component of the BRCA1-RBBP8 complex. Interacts (via the BRCT domains) with RBBP8 ('Ser-327' phosphorylated form); the interaction ubiquitinates RBBP8, regulates CHEK1 activation, and involves RBBP8 in BRCA1-dependent G2/M checkpoint control on DNA damage. Associates with RNA polymerase II holoenzyme. Interacts with SMC1A, NELFB, DCLRE1C, CLSPN. CHEK1, CHEK2, BAP1, BRCC3, UBXN1 and PCLAF. Interacts (via BRCT domains) with BRIP1 (phosphorylated form). Interacts with FANCD2 (ubiquitinated form). Interacts with H2AX (phosphorylated on 'Ser-140'). Interacts (via the BRCT domains) with ACACA (phosphorylated form); the interaction prevents dephosphorylation of ACACA. Part of a BRCA complex containing BRCA1, BRCA2 and PALB2. Interacts directly with PALB2; the interaction is essential for its function in HRR. Interacts directly with BRCA2; the interaction occurs only in the presence of PALB2 which serves as the bridging protein. Interacts (via the BRCT domains) with LMO4; the interaction represses the transcriptional activity of BRCA1. Interacts (via the BRCT domains) with CCAR2 (via N-terminus); the interaction represses the transcriptional activator activity of BRCA1. Interacts with EXD2. Interacts (via C-terminus) with DHX9; this interaction is direct and links BRCA1 to the RNA polymerase II holoenzyme. Interacts with DNA helicase ZGRF1; the interaction is increased following DNA damage induction. Post-translationally, phosphorylated in response to IR, UV, and various stimuli that cause checkpoint activation, probably by ATM or ATR. Phosphorylation at Ser-988 by CHEK2 regulates mitotic spindle assembly. Phosphorylation by AURKA regulates centrosomal microtubule nucleation. In terms of processing, autoubiquitinated, undergoes 'Lys-6'-linked polyubiquitination. 'Lys-6'-linked polyubiquitination does not promote degradation.

The protein resides in the nucleus. Its subcellular location is the chromosome. It localises to the cytoplasm. It catalyses the reaction S-ubiquitinyl-[E2 ubiquitin-conjugating enzyme]-L-cysteine + [acceptor protein]-L-lysine = [E2 ubiquitin-conjugating enzyme]-L-cysteine + N(6)-ubiquitinyl-[acceptor protein]-L-lysine.. E3 ubiquitin-protein ligase that specifically mediates the formation of 'Lys-6'-linked polyubiquitin chains and plays a central role in DNA repair by facilitating cellular responses to DNA damage. It is unclear whether it also mediates the formation of other types of polyubiquitin chains. The BRCA1-BARD1 heterodimer coordinates a diverse range of cellular pathways such as DNA damage repair, ubiquitination and transcriptional regulation to maintain genomic stability. Regulates centrosomal microtubule nucleation. Required for appropriate cell cycle arrests after ionizing irradiation in both the S-phase and the G2 phase of the cell cycle. Required for FANCD2 targeting to sites of DNA damage. Inhibits lipid synthesis by binding to inactive phosphorylated ACACA and preventing its dephosphorylation. Contributes to homologous recombination repair (HRR) via its direct interaction with PALB2, fine-tunes recombinational repair partly through its modulatory role in the PALB2-dependent loading of BRCA2-RAD51 repair machinery at DNA breaks. Component of the BRCA1-RBBP8 complex which regulates CHEK1 activation and controls cell cycle G2/M checkpoints on DNA damage via BRCA1-mediated ubiquitination of RBBP8. Acts as a transcriptional activator. In Pan troglodytes (Chimpanzee), this protein is Breast cancer type 1 susceptibility protein homolog (BRCA1).